The sequence spans 148 residues: MKALFLIGLLALVASTAFAQYSEVVGSYDVAGGGGAQQCPVETKLNSCRNYLLDRCSTMKDFPVTWRWWKWWKGGCQELLGECCSRLGQMPPQCRCNIIQGSIQGDLGGIFGFQRDRASKVIQEAKNLPPRCNQGPPCNIPGTIGYYW.

An N-terminal signal peptide occupies residues 1 to 19 (MKALFLIGLLALVASTAFA). A propeptide spanning residues 20 to 28 (QYSEVVGSY) is cleaved from the precursor. Positions 147–148 (YW) are cleaved as a propeptide — removed in mature form.

Five disulfide bonds are present. Endosperm and aleurone layer of developing kernels. In the aleurone layer, mainly localized to starch granules and the surface of the plasma membrane, forming a uniform layer, also abundant in the intercellular space. In the endosperm, mainly localized to starch granules and the plasma membrane, but less abundant in the intercellular space. Not found in roots or coleoptiles.

It is found in the membrane. The protein resides in the secreted. The protein localises to the extracellular space. In terms of biological role, acts as a membranotoxin, probably through its antibacterial and antifungal activities, contributing to the defense mechanism of the plant against predators. Forms monovalent cation-selective ion channels in membranes. Has antibacterial activity against the Gram-positive bacteria S.aureus and C.michiganensis, and the Gram-negative bacteria E.coli, P.syringae pv phaseoli, A.tumefaciens and E.carotovora subsp carotovora. Acts synergistically with PINB against bacteria. Contributes to grain texture and hardness. The sequence is that of Puroindoline-A (PINA) from Triticum aestivum (Wheat).